The sequence spans 376 residues: Erythronate-4-phosphate dehydrogenase (376 aa).

Positions 45 and 67 each coordinate substrate. D147 is an NAD(+) binding site. R209 is an active-site residue. D233 serves as a coordination point for NAD(+). The active site involves E238. Residue H255 is the Proton donor of the active site. G258 is a binding site for NAD(+). Substrate is bound at residue Y259.

The protein belongs to the D-isomer specific 2-hydroxyacid dehydrogenase family. PdxB subfamily. As to quaternary structure, homodimer.

Its subcellular location is the cytoplasm. It carries out the reaction 4-phospho-D-erythronate + NAD(+) = (R)-3-hydroxy-2-oxo-4-phosphooxybutanoate + NADH + H(+). It functions in the pathway cofactor biosynthesis; pyridoxine 5'-phosphate biosynthesis; pyridoxine 5'-phosphate from D-erythrose 4-phosphate: step 2/5. In terms of biological role, catalyzes the oxidation of erythronate-4-phosphate to 3-hydroxy-2-oxo-4-phosphonooxybutanoate. This is Erythronate-4-phosphate dehydrogenase from Shewanella sp. (strain MR-4).